The primary structure comprises 72 residues: SRY-related protein AES1 (72 aa).

Residues 1–69 constitute a DNA-binding region (HMG box); it reads VKRPMNAFMV…KHMADYPDYK (69 aa).

The protein localises to the nucleus. The polypeptide is SRY-related protein AES1 (Alligator mississippiensis (American alligator)).